The following is a 164-amino-acid chain: Cyclic pyranopterin monophosphate synthase (164 aa).

Residues L73–H75 and M111–E112 contribute to the substrate site. D126 is a catalytic residue.

Belongs to the MoaC family. Homohexamer; trimer of dimers.

It catalyses the reaction (8S)-3',8-cyclo-7,8-dihydroguanosine 5'-triphosphate = cyclic pyranopterin phosphate + diphosphate. It participates in cofactor biosynthesis; molybdopterin biosynthesis. Catalyzes the conversion of (8S)-3',8-cyclo-7,8-dihydroguanosine 5'-triphosphate to cyclic pyranopterin monophosphate (cPMP). The polypeptide is Cyclic pyranopterin monophosphate synthase (Herpetosiphon aurantiacus (strain ATCC 23779 / DSM 785 / 114-95)).